A 336-amino-acid polypeptide reads, in one-letter code: DNA-directed RNA polymerase subunit alpha (336 aa).

Residues 1–235 (MIEFVIPKKL…HFKIVTEGLP (235 aa)) are alpha N-terminal domain (alpha-NTD). Residues 264-336 (RENSDVYNRK…KFGLELRKGE (73 aa)) are alpha C-terminal domain (alpha-CTD).

Belongs to the RNA polymerase alpha chain family. Homodimer. The RNAP catalytic core consists of 2 alpha, 1 beta, 1 beta' and 1 omega subunit. When a sigma factor is associated with the core the holoenzyme is formed, which can initiate transcription.

The catalysed reaction is RNA(n) + a ribonucleoside 5'-triphosphate = RNA(n+1) + diphosphate. Its function is as follows. DNA-dependent RNA polymerase catalyzes the transcription of DNA into RNA using the four ribonucleoside triphosphates as substrates. This Thermotoga maritima (strain ATCC 43589 / DSM 3109 / JCM 10099 / NBRC 100826 / MSB8) protein is DNA-directed RNA polymerase subunit alpha.